Reading from the N-terminus, the 248-residue chain is tRNA (guanine-N(1)-)-methyltransferase (248 aa).

S-adenosyl-L-methionine-binding positions include Gly116 and 135-140; that span reads IGDFVL.

This sequence belongs to the RNA methyltransferase TrmD family. Homodimer.

It localises to the cytoplasm. It catalyses the reaction guanosine(37) in tRNA + S-adenosyl-L-methionine = N(1)-methylguanosine(37) in tRNA + S-adenosyl-L-homocysteine + H(+). Functionally, specifically methylates guanosine-37 in various tRNAs. This Anaeromyxobacter sp. (strain Fw109-5) protein is tRNA (guanine-N(1)-)-methyltransferase.